The chain runs to 464 residues: Argininosuccinate lyase (464 aa).

Belongs to the lyase 1 family. Argininosuccinate lyase subfamily.

It localises to the cytoplasm. It carries out the reaction 2-(N(omega)-L-arginino)succinate = fumarate + L-arginine. Its pathway is amino-acid biosynthesis; L-arginine biosynthesis; L-arginine from L-ornithine and carbamoyl phosphate: step 3/3. In Desulfotalea psychrophila (strain LSv54 / DSM 12343), this protein is Argininosuccinate lyase.